Consider the following 398-residue polypeptide: Pentalenolactone synthase (398 aa).

A heme-binding site is contributed by Cys347.

Belongs to the cytochrome P450 family. It depends on heme as a cofactor.

The catalysed reaction is pentalenolactone F + 2 reduced [2Fe-2S]-[ferredoxin] + O2 + 2 H(+) = pentalenolactone + 2 oxidized [2Fe-2S]-[ferredoxin] + 2 H2O. It functions in the pathway antibiotic biosynthesis; pentalenolactone biosynthesis. Catalyzes the final step in the biosynthesis of the sesquiterpenoid antibiotic pentalenolactone by mediating the oxidative rearrangement of pentalenolactone F to pentalenolactone. The protein is Pentalenolactone synthase (penM) of Streptomyces exfoliatus (Streptomyces hydrogenans).